The following is a 227-amino-acid chain: Large ribosomal subunit protein uL3 (227 aa).

Glutamine 158 bears the N5-methylglutamine mark.

It belongs to the universal ribosomal protein uL3 family. In terms of assembly, part of the 50S ribosomal subunit. Forms a cluster with proteins L14 and L19. Post-translationally, methylated by PrmB.

One of the primary rRNA binding proteins, it binds directly near the 3'-end of the 23S rRNA, where it nucleates assembly of the 50S subunit. In Polaromonas sp. (strain JS666 / ATCC BAA-500), this protein is Large ribosomal subunit protein uL3.